Here is a 239-residue protein sequence, read N- to C-terminus: Phosphoglycolate phosphatase (239 aa).

Catalysis depends on aspartate 14, which acts as the Nucleophile. Mg(2+) is bound by residues aspartate 14 and aspartate 16. Residue lysine 160 participates in substrate binding. Positions 183 and 187 each coordinate Mg(2+).

This sequence belongs to the archaeal SPP-like hydrolase family. Mg(2+) serves as cofactor.

The enzyme catalyses 2-phosphoglycolate + H2O = glycolate + phosphate. Its function is as follows. Catalyzes the dephosphorylation of 2-phosphoglycolate. This chain is Phosphoglycolate phosphatase, found in Aeropyrum pernix (strain ATCC 700893 / DSM 11879 / JCM 9820 / NBRC 100138 / K1).